A 480-amino-acid chain; its full sequence is Protein nucleotidyltransferase YdiU (480 aa).

ATP contacts are provided by Gly86, Gly88, Arg89, Lys109, Asp121, Gly122, Arg172, and Arg179. Catalysis depends on Asp248, which acts as the Proton acceptor. Mg(2+) is bound by residues Asn249 and Asp258. ATP is bound at residue Asp258.

This sequence belongs to the SELO family. Requires Mg(2+) as cofactor. Mn(2+) is required as a cofactor.

It carries out the reaction L-seryl-[protein] + ATP = 3-O-(5'-adenylyl)-L-seryl-[protein] + diphosphate. It catalyses the reaction L-threonyl-[protein] + ATP = 3-O-(5'-adenylyl)-L-threonyl-[protein] + diphosphate. The catalysed reaction is L-tyrosyl-[protein] + ATP = O-(5'-adenylyl)-L-tyrosyl-[protein] + diphosphate. The enzyme catalyses L-histidyl-[protein] + UTP = N(tele)-(5'-uridylyl)-L-histidyl-[protein] + diphosphate. It carries out the reaction L-seryl-[protein] + UTP = O-(5'-uridylyl)-L-seryl-[protein] + diphosphate. It catalyses the reaction L-tyrosyl-[protein] + UTP = O-(5'-uridylyl)-L-tyrosyl-[protein] + diphosphate. In terms of biological role, nucleotidyltransferase involved in the post-translational modification of proteins. It can catalyze the addition of adenosine monophosphate (AMP) or uridine monophosphate (UMP) to a protein, resulting in modifications known as AMPylation and UMPylation. The protein is Protein nucleotidyltransferase YdiU of Salmonella typhi.